A 363-amino-acid chain; its full sequence is Protein Wnt-5b (363 aa).

Positions 1-21 (MDVRMNQGHLLLAVTLIVCNS) are cleaved as a signal peptide. C87 and C98 are oxidised to a cystine. 2 N-linked (GlcNAc...) asparagine glycosylation sites follow: N97 and N103. Intrachain disulfides connect C137–C145, C147–C165, C221–C235, C223–C230, C292–C323, C308–C318, C322–C362, C338–C353, C340–C350, and C345–C346. S227 carries the O-palmitoleoyl serine; by PORCN lipid modification. N-linked (GlcNAc...) asparagine glycans are attached at residues N295 and N309.

Belongs to the Wnt family. In terms of processing, palmitoleoylation is required for efficient binding to frizzled receptors. Depalmitoleoylation leads to Wnt signaling pathway inhibition.

Its subcellular location is the secreted. It localises to the extracellular space. It is found in the extracellular matrix. Functionally, ligand for members of the frizzled family of seven transmembrane receptors. Can activate or inhibit canonical Wnt signaling, depending on receptor context. Required during embryogenesis for extension of the primary anterior-posterior axis. Regulates convergent extension movements and hypaxial myogenesis during gastrulation via activation of non-canonical Wnt signaling. This chain is Protein Wnt-5b (wnt5b), found in Danio rerio (Zebrafish).